An 890-amino-acid polypeptide reads, in one-letter code: V-type proton ATPase subunit a, Golgi isoform (890 aa).

N-acetylmethionine is present on Met1. At 1-450 the chain is on the cytoplasmic side; it reads MNQEEAIFRS…DAYGIATYKE (450 aa). Residues 113–154 adopt a coiled-coil conformation; the sequence is LENVNDMVKEITDCESRARQLDESLDSLRSKLNDLLEQRQVI. 2 positions are modified to phosphoserine: Ser223 and Ser228. Residues 297-347 are a coiled coil; that stretch reads LKKVKRVIDSLNGKIVSLNTRSSELVDTLNRQIDDLQRILDTTEQTLHTEL. Residues 451 to 469 form a helical membrane-spanning segment; it reads INAGLATVVTFPFMFAIMF. At 470–471 the chain is on the vacuolar side; that stretch reads GD. The chain crosses the membrane as a helical span at residues 472–488; the sequence is MGHGFILFLMALFLVLN. Residues 489–502 lie on the Cytoplasmic side of the membrane; it reads ERKFGAMHRDEIFD. The helical transmembrane segment at 503–532 threads the bilayer; it reads MAFTGRYVLLLMGAFSVYTGLLYNDIFSKS. The Vacuolar segment spans residues 533–580; sequence MTIFKSGWQWPSTFRKGESIEAKKTGVYPFGLDFAWHGTDNGLLFSNS. A helical membrane pass occupies residues 581-600; it reads YKMKLSILMGYAHMTYSFMF. Topologically, residues 601-618 are cytoplasmic; sequence SYINYRAKNSKVDIIGNF. A helical transmembrane segment spans residues 619–639; the sequence is IPGLVFMQSIFGYLSWAIVYK. Topologically, residues 640–682 are vacuolar; sequence WSKDWIKDDKPAPGLLNMLINMFLAPGTIDDQLYSGQAKLQVV. Residues 683-702 traverse the membrane as a helical segment; the sequence is LLLAALVCVPWLLLYKPLTL. Residues 703-779 lie on the Cytoplasmic side of the membrane; sequence RRLNKNGGGG…DVMIHQVIHT (77 aa). The chain crosses the membrane as a helical span at residues 780 to 804; sequence IEFCLNCISHTASYLRLWALSLAHA. Residues 805 to 828 lie on the Vacuolar side of the membrane; that stretch reads QLSSVLWDMTISNAFSSKNSGSPL. The helical transmembrane segment at 829–867 threads the bilayer; it reads AVMKVVFLFAMWFVLTVCILVFMEGTSAMLHALRLHWVE. Residues 868–890 lie on the Cytoplasmic side of the membrane; it reads AMSKFFEGEGYAYEPFSFRAIIE.

Belongs to the V-ATPase 116 kDa subunit family. As to quaternary structure, V-ATPase is a heteromultimeric enzyme composed of a peripheral catalytic V1 complex (components A to H) attached to an integral membrane V0 proton pore complex (components: a, c, c', c'', d, e, f and VOA1). Glycosylated.

The protein resides in the endosome membrane. It localises to the golgi apparatus membrane. Its function is as follows. Subunit of the V0 complex of vacuolar(H+)-ATPase (V-ATPase), a multisubunit enzyme composed of a peripheral complex (V1) that hydrolyzes ATP and a membrane integral complex (V0) that translocates protons. V-ATPase is responsible for acidifying and maintaining the pH of intracellular compartments. Is present only in Golgi- and endosome-residing V-ATPase complexes; enzymes containing this subunit have a 4-fold lower ratio of proton transport to ATP hydrolysis than complexes containing the vacuolar isoform and do not dissociate V1 and V0 in response to glucose depletion. This is V-type proton ATPase subunit a, Golgi isoform (STV1) from Saccharomyces cerevisiae (strain ATCC 204508 / S288c) (Baker's yeast).